A 359-amino-acid chain; its full sequence is Peptide chain release factor 1 (359 aa).

Position 235 is an N5-methylglutamine (Gln-235). Positions 283–305 are disordered; that stretch reads QKAESERSASRKTQVGSGDRSER.

Belongs to the prokaryotic/mitochondrial release factor family. In terms of processing, methylated by PrmC. Methylation increases the termination efficiency of RF1.

It is found in the cytoplasm. Peptide chain release factor 1 directs the termination of translation in response to the peptide chain termination codons UAG and UAA. The protein is Peptide chain release factor 1 of Bartonella bacilliformis (strain ATCC 35685 / KC583 / Herrer 020/F12,63).